A 359-amino-acid chain; its full sequence is DNA integrity scanning protein DisA (359 aa).

Residues 10–148 form the DAC domain; sequence ELDLLDIVQF…GNRRYTLKDI (139 aa). ATP-binding positions include glycine 77, leucine 95, and 108–112; that span reads MRHRT.

It belongs to the DisA family. Homooctamer. The cofactor is Mg(2+).

The catalysed reaction is 2 ATP = 3',3'-c-di-AMP + 2 diphosphate. Functionally, participates in a DNA-damage check-point that is active prior to asymmetric division when DNA is damaged. DisA forms globular foci that rapidly scan along the chromosomes during sporulation, searching for lesions. When a lesion is present, DisA pauses at the lesion site. This triggers a cellular response that culminates in a temporary block in sporulation initiation. In terms of biological role, also has diadenylate cyclase activity, catalyzing the condensation of 2 ATP molecules into cyclic di-AMP (c-di-AMP). c-di-AMP acts as a signaling molecule that couples DNA integrity with progression of sporulation. The rise in c-di-AMP level generated by DisA while scanning the chromosome, operates as a positive signal that advances sporulation; upon encountering a lesion, the DisA focus arrests at the damaged site and halts c-di-AMP synthesis. The protein is DNA integrity scanning protein DisA of Bacillus pumilus (strain SAFR-032).